The chain runs to 224 residues: Cytidylate kinase (224 aa).

An ATP-binding site is contributed by 11-19; it reads GPAAAGKST.

This sequence belongs to the cytidylate kinase family. Type 1 subfamily.

The protein localises to the cytoplasm. The catalysed reaction is CMP + ATP = CDP + ADP. The enzyme catalyses dCMP + ATP = dCDP + ADP. This chain is Cytidylate kinase, found in Listeria monocytogenes serovar 1/2a (strain ATCC BAA-679 / EGD-e).